Here is a 660-residue protein sequence, read N- to C-terminus: MLPKSVTQGLVLALLVGTVAVARPRNLLSLLALGQGALDRLELDGLLNTLVARVHCTDGPCEKCLSVENVLALGKPDKPQPAPESVLESRHIIYLSAAAALYLNNPEKTCKDIQAGLLASHVDDYLATLESPEAMTLGLSQLLQKIEAHAASQPTGEKTCVDLPQLLEEAEAAGVSKSAGLVLTALLDHVINGSCFQGLPSPQYFVDFVFRLHSSDPPNITLHELENLMHHLGVGGEDHSDHDDHGDHADHSHPDRKASHQDSELHTPHNSNSSVWDTLCLSAKDIMAVYGLSEEAGVSPQAWAQLTPALVQQQLSGACSPYPTIRIQDQLSQTERYLYGSLATLLICLCAVFGLLLLTCAKCSTATHYIMQTFLSLAVGALTGDALLHLIPKVLGLHTHGGEGHTHEEEVGVGGQATWRLLAVLGGFYIFFLFESFFNLLLPRDQDSEKDGPCSHGGHSHGISLQLAPSNLRQSKQTHESSRSDLVAEETPELLNPETRRLRAELRLLPYLITLGDAVHNFADGLAVGAAFSSSWKTGLATSLAVFCHELPHELGDFAALLHAGLSVKRALLLNLASALTAFAGLYVALAVGVGEEGEAWILAVATGLFLYVALCDMLPAMMNVRDQRPWLLFLLHNVGLLGGWTVLLLLSLYEDNITF.

Positions 1–22 are cleaved as a signal peptide; the sequence is MLPKSVTQGLVLALLVGTVAVA. The Extracellular portion of the chain corresponds to 23–337; that stretch reads RPRNLLSLLA…QDQLSQTERY (315 aa). 3 disulfides stabilise this stretch: cysteine 56/cysteine 61, cysteine 64/cysteine 110, and cysteine 160/cysteine 195. N-linked (GlcNAc...) asparagine glycosylation is found at asparagine 192 and asparagine 219. The segment at 233–273 is disordered; sequence GVGGEDHSDHDDHGDHADHSHPDRKASHQDSELHTPHNSNS. A compositionally biased stretch (basic and acidic residues) spans 236–267; the sequence is GEDHSDHDDHGDHADHSHPDRKASHQDSELHT. Asparagine 272 is a glycosylation site (N-linked (GlcNAc...) asparagine). Cysteine 280 and cysteine 319 are joined by a disulfide. The chain crosses the membrane as a helical span at residues 338-358; the sequence is LYGSLATLLICLCAVFGLLLL. Topologically, residues 359–376 are cytoplasmic; it reads TCAKCSTATHYIMQTFLS. A helical transmembrane segment spans residues 377–397; the sequence is LAVGALTGDALLHLIPKVLGL. The Extracellular portion of the chain corresponds to 398–420; that stretch reads HTHGGEGHTHEEEVGVGGQATWR. The helical transmembrane segment at 421-441 threads the bilayer; it reads LLAVLGGFYIFFLFESFFNLL. Topologically, residues 442–511 are cytoplasmic; that stretch reads LPRDQDSEKD…LRAELRLLPY (70 aa). The short motif at 465–467 is the Essential for SLC39A4 endocytosis element; that stretch reads LQL. Residues 512 to 531 traverse the membrane as a helical segment; sequence LITLGDAVHNFADGLAVGAA. 3 residues coordinate Zn(2+): histidine 520, asparagine 521, and aspartate 524. At 532-539 the chain is on the extracellular side; that stretch reads FSSSWKTG. Residues 540 to 566 form a helical membrane-spanning segment; the sequence is LATSLAVFCHELPHELGDFAALLHAGL. Residues histidine 549, glutamate 550, and histidine 553 each contribute to the Zn(2+) site. At 567 to 571 the chain is on the cytoplasmic side; it reads SVKRA. A helical membrane pass occupies residues 572–592; sequence LLLNLASALTAFAGLYVALAV. Residues 593–599 are Extracellular-facing; it reads GVGEEGE. Residues 600-620 traverse the membrane as a helical segment; it reads AWILAVATGLFLYVALCDMLP. At 621 to 630 the chain is on the cytoplasmic side; the sequence is AMMNVRDQRP. The chain crosses the membrane as a helical span at residues 631–651; that stretch reads WLLFLLHNVGLLGGWTVLLLL. Over 652 to 660 the chain is Extracellular; the sequence is SLYEDNITF. A glycan (N-linked (GlcNAc...) asparagine) is linked at asparagine 657.

Belongs to the ZIP transporter (TC 2.A.5) family. In terms of assembly, homodimer. Homodimerization is mediated by the transmembrane domain. Post-translationally, the extracellular N-terminal ectodomain is cleaved when cells are Zn(2+) deficient, N-terminally cleaved SLC39A4 is then internalized faster. In terms of processing, under excess Zn(2+) conditions, SLC39A4 on the cell surface is rapidly endocytosed, ubiquitinated, and degraded. N-glycosylated. In terms of tissue distribution, highly expressed in the small intestine and embryonic visceral yolk sac. Weakly expressed in the stomach and liver.

It is found in the cell membrane. The protein resides in the recycling endosome membrane. The protein localises to the apical cell membrane. The enzyme catalyses Zn(2+)(in) = Zn(2+)(out). Functionally, selective transporter that mediates the uptake of Zn(2+). Plays an essential role for dietary zinc uptake from small intestine. The Zn(2+) uniporter activity is regulated by zinc availability. Also exhibits polyspecific binding and transport of Cu(2+), Cd(2+) and possibly Ni(2+) but at higher concentrations. This chain is Zinc transporter ZIP4 (Slc39a4), found in Mus musculus (Mouse).